Reading from the N-terminus, the 102-residue chain is COX assembly mitochondrial protein 2 homolog (102 aa).

The 45-residue stretch at 11–55 folds into the CHCH domain; sequence TKECNMLIEFLQRCHSEKPIGKMIGKCSYWDEAVWQCTKKERIWR. 2 consecutive short sequence motifs (cx9C motif) follow at residues 14–24 and 37–47; these read CNMLIEFLQRC and CSYWDEAVWQC. Intrachain disulfides connect Cys14-Cys47 and Cys24-Cys37.

Belongs to the CMC family.

Its subcellular location is the mitochondrion. In terms of biological role, may be involved in cytochrome c oxidase biogenesis. The polypeptide is COX assembly mitochondrial protein 2 homolog (Caenorhabditis elegans).